Consider the following 114-residue polypeptide: Histone H3-6 (114 aa).

Over residues 1 to 17 (NTGGKAPRKHIAHKQAK) the composition is skewed to basic residues. Residues 1 to 32 (NTGGKAPRKHIAHKQAKKSSAAAATGGVKKPH) are disordered. Over residues 18–28 (KSSAAAATGGV) the composition is skewed to low complexity.

Belongs to the histone H3 family. As to quaternary structure, the nucleosome is a histone octamer containing two molecules each of H2A, H2B, H3 and H4 assembled in one H3-H4 heterotetramer and two H2A-H2B heterodimers. The octamer wraps approximately 147 bp of DNA.

It is found in the nucleus. The protein localises to the chromosome. In terms of biological role, core component of nucleosome. Nucleosomes wrap and compact DNA into chromatin, limiting DNA accessibility to the cellular machineries which require DNA as a template. Histones thereby play a central role in transcription regulation, DNA repair, DNA replication and chromosomal stability. DNA accessibility is regulated via a complex set of post-translational modifications of histones, also called histone code, and nucleosome remodeling. This chain is Histone H3-6 (H3-6), found in Stylonychia lemnae (Ciliate).